Reading from the N-terminus, the 215-residue chain is Adenylate kinase (215 aa).

Residue 10-15 coordinates ATP; that stretch reads GAGKGT. The interval 30 to 58 is NMP; the sequence is STGDMLREAKRSGTLEKRYLDIMDSGGLL. Residues Thr-31, Arg-36, 56 to 58, 84 to 87, and Gln-91 contribute to the AMP site; these read GLL and GFPR. The tract at residues 128–158 is LID; it reads HRRTDKRSGQIYHLVYNPPPPGAELEHRADD. ATP-binding positions include Arg-129 and 138 to 139; that span reads IY. 2 residues coordinate AMP: Arg-155 and Arg-166. An ATP-binding site is contributed by Gly-194.

Belongs to the adenylate kinase family. As to quaternary structure, monomer.

It localises to the cytoplasm. The catalysed reaction is AMP + ATP = 2 ADP. The protein operates within purine metabolism; AMP biosynthesis via salvage pathway; AMP from ADP: step 1/1. In terms of biological role, catalyzes the reversible transfer of the terminal phosphate group between ATP and AMP. Plays an important role in cellular energy homeostasis and in adenine nucleotide metabolism. This is Adenylate kinase from Sorangium cellulosum (strain So ce56) (Polyangium cellulosum (strain So ce56)).